The primary structure comprises 476 residues: Aspartyl/glutamyl-tRNA(Asn/Gln) amidotransferase subunit B (476 aa).

This sequence belongs to the GatB/GatE family. GatB subfamily. Heterotrimer of A, B and C subunits.

The catalysed reaction is L-glutamyl-tRNA(Gln) + L-glutamine + ATP + H2O = L-glutaminyl-tRNA(Gln) + L-glutamate + ADP + phosphate + H(+). It catalyses the reaction L-aspartyl-tRNA(Asn) + L-glutamine + ATP + H2O = L-asparaginyl-tRNA(Asn) + L-glutamate + ADP + phosphate + 2 H(+). Its function is as follows. Allows the formation of correctly charged Asn-tRNA(Asn) or Gln-tRNA(Gln) through the transamidation of misacylated Asp-tRNA(Asn) or Glu-tRNA(Gln) in organisms which lack either or both of asparaginyl-tRNA or glutaminyl-tRNA synthetases. The reaction takes place in the presence of glutamine and ATP through an activated phospho-Asp-tRNA(Asn) or phospho-Glu-tRNA(Gln). The polypeptide is Aspartyl/glutamyl-tRNA(Asn/Gln) amidotransferase subunit B (Clostridium botulinum (strain 657 / Type Ba4)).